The sequence spans 418 residues: Serine--tRNA ligase (418 aa).

An L-serine-binding site is contributed by 231–233; sequence TAE. 262–264 contributes to the ATP binding site; the sequence is RRE. Residue Glu285 coordinates L-serine. 349–352 is a binding site for ATP; it reads EISS. Ser384 is an L-serine binding site.

The protein belongs to the class-II aminoacyl-tRNA synthetase family. Type-1 seryl-tRNA synthetase subfamily. In terms of assembly, homodimer. The tRNA molecule binds across the dimer.

The protein resides in the cytoplasm. The enzyme catalyses tRNA(Ser) + L-serine + ATP = L-seryl-tRNA(Ser) + AMP + diphosphate + H(+). It catalyses the reaction tRNA(Sec) + L-serine + ATP = L-seryl-tRNA(Sec) + AMP + diphosphate + H(+). The protein operates within aminoacyl-tRNA biosynthesis; selenocysteinyl-tRNA(Sec) biosynthesis; L-seryl-tRNA(Sec) from L-serine and tRNA(Sec): step 1/1. Functionally, catalyzes the attachment of serine to tRNA(Ser). Is also able to aminoacylate tRNA(Sec) with serine, to form the misacylated tRNA L-seryl-tRNA(Sec), which will be further converted into selenocysteinyl-tRNA(Sec). In Coprothermobacter proteolyticus (strain ATCC 35245 / DSM 5265 / OCM 4 / BT), this protein is Serine--tRNA ligase.